Here is a 186-residue protein sequence, read N- to C-terminus: uncharacterized protein (186 aa).

The next 4 helical transmembrane spans lie at 5 to 25, 39 to 59, 62 to 82, and 122 to 142; these read LIACLIINNLTLIHFVGFEDI, IITITSLLIYSISFYLYKLFA, NLLFLVPIFYVILIYVLILLF, and GFFEGLEILILSALGILIALM.

Its subcellular location is the cell membrane. This is an uncharacterized protein from Borreliella burgdorferi (strain ATCC 35210 / DSM 4680 / CIP 102532 / B31) (Borrelia burgdorferi).